The sequence spans 254 residues: Triosephosphate isomerase (254 aa).

Asn12–Lys14 serves as a coordination point for substrate. Residue His99 is the Electrophile of the active site. The active-site Proton acceptor is Glu169. Residues Gly175, Ser214, and Gly235 to Gly236 contribute to the substrate site.

This sequence belongs to the triosephosphate isomerase family. In terms of assembly, homodimer.

Its subcellular location is the cytoplasm. It catalyses the reaction D-glyceraldehyde 3-phosphate = dihydroxyacetone phosphate. It functions in the pathway carbohydrate biosynthesis; gluconeogenesis. Its pathway is carbohydrate degradation; glycolysis; D-glyceraldehyde 3-phosphate from glycerone phosphate: step 1/1. Functionally, involved in the gluconeogenesis. Catalyzes stereospecifically the conversion of dihydroxyacetone phosphate (DHAP) to D-glyceraldehyde-3-phosphate (G3P). The protein is Triosephosphate isomerase of Brucella melitensis biotype 1 (strain ATCC 23456 / CCUG 17765 / NCTC 10094 / 16M).